Reading from the N-terminus, the 224-residue chain is ATP phosphoribosyltransferase (224 aa).

This sequence belongs to the ATP phosphoribosyltransferase family. Short subfamily. In terms of assembly, heteromultimer composed of HisG and HisZ subunits.

The protein resides in the cytoplasm. It catalyses the reaction 1-(5-phospho-beta-D-ribosyl)-ATP + diphosphate = 5-phospho-alpha-D-ribose 1-diphosphate + ATP. It functions in the pathway amino-acid biosynthesis; L-histidine biosynthesis; L-histidine from 5-phospho-alpha-D-ribose 1-diphosphate: step 1/9. In terms of biological role, catalyzes the condensation of ATP and 5-phosphoribose 1-diphosphate to form N'-(5'-phosphoribosyl)-ATP (PR-ATP). Has a crucial role in the pathway because the rate of histidine biosynthesis seems to be controlled primarily by regulation of HisG enzymatic activity. The protein is ATP phosphoribosyltransferase of Cupriavidus metallidurans (strain ATCC 43123 / DSM 2839 / NBRC 102507 / CH34) (Ralstonia metallidurans).